The primary structure comprises 289 residues: Acetyl-coenzyme A carboxylase carboxyl transferase subunit beta (289 aa).

In terms of domain architecture, CoA carboxyltransferase N-terminal spans 28–289 (VMTKCPECKK…QGGEMAVWQS (262 aa)). 4 residues coordinate Zn(2+): cysteine 32, cysteine 35, cysteine 51, and cysteine 54. Residues 32–54 (CPECKKIMYTKELLKNLKVCVNC) form a C4-type zinc finger.

It belongs to the AccD/PCCB family. As to quaternary structure, acetyl-CoA carboxylase is a heterohexamer composed of biotin carboxyl carrier protein (AccB), biotin carboxylase (AccC) and two subunits each of ACCase subunit alpha (AccA) and ACCase subunit beta (AccD). Zn(2+) serves as cofactor.

The protein resides in the cytoplasm. It catalyses the reaction N(6)-carboxybiotinyl-L-lysyl-[protein] + acetyl-CoA = N(6)-biotinyl-L-lysyl-[protein] + malonyl-CoA. Its pathway is lipid metabolism; malonyl-CoA biosynthesis; malonyl-CoA from acetyl-CoA: step 1/1. Its function is as follows. Component of the acetyl coenzyme A carboxylase (ACC) complex. Biotin carboxylase (BC) catalyzes the carboxylation of biotin on its carrier protein (BCCP) and then the CO(2) group is transferred by the transcarboxylase to acetyl-CoA to form malonyl-CoA. The polypeptide is Acetyl-coenzyme A carboxylase carboxyl transferase subunit beta (Bacillus cereus (strain ATCC 14579 / DSM 31 / CCUG 7414 / JCM 2152 / NBRC 15305 / NCIMB 9373 / NCTC 2599 / NRRL B-3711)).